The sequence spans 169 residues: Head completion/stabilization protein (169 aa).

To phage HP1 protein ORF20.

Its function is as follows. Carries out the completion of filled heads by rendering the newly packaged DNA in filled heads resistant to DNase. The protein is assumed to bind to DNA-filled capsids. In Enterobacteriaceae (Bacteriophage P2), this protein is Head completion/stabilization protein (L).